We begin with the raw amino-acid sequence, 510 residues long: Major facilitator superfamily domain-containing protein 4A (510 aa).

The next 12 membrane-spanning stretches (helical) occupy residues Leu19 to Leu39, Ile53 to Val73, Leu82 to Cys102, Val107 to Asn127, Ala139 to Ile159, Tyr218 to Leu238, Phe303 to Ala323, Gly345 to Val365, Val380 to Phe400, Val401 to Thr421, Val434 to Phe454, and Phe462 to Phe482.

This sequence belongs to the major facilitator superfamily.

Its subcellular location is the membrane. In Mus musculus (Mouse), this protein is Major facilitator superfamily domain-containing protein 4A.